The sequence spans 339 residues: UDP-3-O-acylglucosamine N-acyltransferase (339 aa).

His238 acts as the Proton acceptor in catalysis.

It belongs to the transferase hexapeptide repeat family. LpxD subfamily. Homotrimer.

The enzyme catalyses a UDP-3-O-[(3R)-3-hydroxyacyl]-alpha-D-glucosamine + a (3R)-hydroxyacyl-[ACP] = a UDP-2-N,3-O-bis[(3R)-3-hydroxyacyl]-alpha-D-glucosamine + holo-[ACP] + H(+). Its pathway is bacterial outer membrane biogenesis; LPS lipid A biosynthesis. Catalyzes the N-acylation of UDP-3-O-acylglucosamine using 3-hydroxyacyl-ACP as the acyl donor. Is involved in the biosynthesis of lipid A, a phosphorylated glycolipid that anchors the lipopolysaccharide to the outer membrane of the cell. This is UDP-3-O-acylglucosamine N-acyltransferase from Aeromonas hydrophila subsp. hydrophila (strain ATCC 7966 / DSM 30187 / BCRC 13018 / CCUG 14551 / JCM 1027 / KCTC 2358 / NCIMB 9240 / NCTC 8049).